The primary structure comprises 490 residues: Acetyl-coenzyme A carboxylase carboxyl transferase subunit beta, chloroplastic (490 aa).

In terms of domain architecture, CoA carboxyltransferase N-terminal spans 221 to 490 (LWVQCENCYG…PLNQKSSKIK (270 aa)). Cys-225, Cys-228, Cys-244, and Cys-247 together coordinate Zn(2+). The C4-type zinc finger occupies 225 to 247 (CENCYGLNYKKFLKSKMNICEQC).

Belongs to the AccD/PCCB family. As to quaternary structure, acetyl-CoA carboxylase is a heterohexamer composed of biotin carboxyl carrier protein, biotin carboxylase and 2 subunits each of ACCase subunit alpha and ACCase plastid-coded subunit beta (accD). Zn(2+) serves as cofactor. As to expression, expressed in leaves, ripening and mature fruit.

Its subcellular location is the plastid. The protein localises to the chloroplast stroma. The protein resides in the chromoplast stroma. It carries out the reaction N(6)-carboxybiotinyl-L-lysyl-[protein] + acetyl-CoA = N(6)-biotinyl-L-lysyl-[protein] + malonyl-CoA. It functions in the pathway lipid metabolism; malonyl-CoA biosynthesis; malonyl-CoA from acetyl-CoA: step 1/1. Functionally, component of the acetyl coenzyme A carboxylase (ACC) complex. Biotin carboxylase (BC) catalyzes the carboxylation of biotin on its carrier protein (BCCP) and then the CO(2) group is transferred by the transcarboxylase to acetyl-CoA to form malonyl-CoA. Is up-regulated upon chromoplast differentiation, presumably for fatty acid biosynthesis. This chain is Acetyl-coenzyme A carboxylase carboxyl transferase subunit beta, chloroplastic, found in Solanum lycopersicum (Tomato).